Here is a 343-residue protein sequence, read N- to C-terminus: MPIDCKAKCGNKAALKRPKTGDALCKDCFFAAFEAEIHHTIVSSRLFRRGEKVAVAASGGKDSTVLAHVMKLLNERHDYGLDLVLLSIDEGITGYRDDSLETVKQNRDDYQMPLKILSYEELYGWTMDRIVAQIGRSNNCTFCGVFRRQALDRGAKLLGVDSIATGHNADDIAETVLMNILRGDTARLRRCTNIRTGGGEDSIPRVKPLKYSYEKEIVMYAHYKRLVYFSTECVFAPNAYRGHARAFLKDLEKVRPSVIMDIIYSGEQLRFKDTAKKPVRGICERCGFVSSQQPCKACVLLEGLNRGLPKLGIGKKSKGDRMIAQQNQELALRERANLVKNDF.

Belongs to the TtcA family. CTU1/NCS6/ATPBD3 subfamily.

The protein localises to the cytoplasm. It participates in tRNA modification; 5-methoxycarbonylmethyl-2-thiouridine-tRNA biosynthesis. Plays a central role in 2-thiolation of mcm(5)S(2)U at tRNA wobble positions of tRNA(Lys), tRNA(Glu) and tRNA(Gln). Directly binds tRNAs and probably acts by catalyzing adenylation of tRNAs, an intermediate required for 2-thiolation. It is unclear whether it acts as a sulfurtransferase that transfers sulfur from thiocarboxylated URM1 onto the uridine of tRNAs at wobble position. The polypeptide is Cytoplasmic tRNA 2-thiolation protein 1 (Drosophila grimshawi (Hawaiian fruit fly)).